The following is a 2286-amino-acid chain: DNA polymerase epsilon catalytic subunit A (2286 aa).

The tract at residues 1–30 (MSLRSGGRRRADPGADGEASRDDGATSSVS) is disordered. Basic and acidic residues predominate over residues 9-24 (RRADPGADGEASRDDG). 4 positions are modified to phosphoserine: S1184, S1297, S1317, and S1940. The tract at residues 1939–1969 (DSQKAGGAEDEQENEDDEEERDGEEEEEAEE) is disordered. Acidic residues predominate over residues 1946–1969 (AEDEQENEDDEEERDGEEEEEAEE). Positions 2158, 2161, 2187, and 2190 each coordinate Zn(2+). The CysA-type zinc finger occupies 2158–2190 (CRSCNFCRDLDLCKDSSFSEDGAVLPQWLCSNC). [4Fe-4S] cluster is bound by residues C2221, C2224, C2236, and C2238. The short motif at 2221-2238 (CLKCRGVKETSMPVYCSC) is the CysB motif element.

It belongs to the DNA polymerase type-B family. Component of the DNA polymerase epsilon complex consisting of four subunits: the catalytic subunit POLE and the accessory subunits POLE2, POLE3 and POLE4. Interacts with RAD17 and TOPBP1.

The protein resides in the nucleus. It carries out the reaction DNA(n) + a 2'-deoxyribonucleoside 5'-triphosphate = DNA(n+1) + diphosphate. Functionally, catalytic component of the DNA polymerase epsilon complex. Participates in chromosomal DNA replication. Required during synthesis of the leading DNA strands at the replication fork, binds at/or near replication origins and moves along DNA with the replication fork. Has 3'-5' proofreading exonuclease activity that corrects errors arising during DNA replication. Involved in DNA synthesis during DNA repair. Along with DNA polymerase POLD1 and DNA polymerase POLK, has a role in excision repair (NER) synthesis following UV irradiation. This chain is DNA polymerase epsilon catalytic subunit A, found in Homo sapiens (Human).